The chain runs to 162 residues: Ribonuclease P protein component (162 aa).

The disordered stretch occupies residues 1-67 (MDEKDLAAQP…GGKLVSLKGD (67 aa)). The span at 21–31 (GPHEDPRRQEG) shows a compositional bias: basic and acidic residues.

Belongs to the RnpA family. As to quaternary structure, consists of a catalytic RNA component (M1 or rnpB) and a protein subunit.

The catalysed reaction is Endonucleolytic cleavage of RNA, removing 5'-extranucleotides from tRNA precursor.. In terms of biological role, RNaseP catalyzes the removal of the 5'-leader sequence from pre-tRNA to produce the mature 5'-terminus. It can also cleave other RNA substrates such as 4.5S RNA. The protein component plays an auxiliary but essential role in vivo by binding to the 5'-leader sequence and broadening the substrate specificity of the ribozyme. The sequence is that of Ribonuclease P protein component from Thermus brockianus.